A 507-amino-acid polypeptide reads, in one-letter code: ATP synthase subunit alpha, chloroplastic (507 aa).

170 to 177 (GDRQTGKT) lines the ATP pocket.

It belongs to the ATPase alpha/beta chains family. F-type ATPases have 2 components, CF(1) - the catalytic core - and CF(0) - the membrane proton channel. CF(1) has five subunits: alpha(3), beta(3), gamma(1), delta(1), epsilon(1). CF(0) has four main subunits: a, b, b' and c.

The protein localises to the plastid. Its subcellular location is the chloroplast thylakoid membrane. It carries out the reaction ATP + H2O + 4 H(+)(in) = ADP + phosphate + 5 H(+)(out). Its function is as follows. Produces ATP from ADP in the presence of a proton gradient across the membrane. The alpha chain is a regulatory subunit. The polypeptide is ATP synthase subunit alpha, chloroplastic (Ceratophyllum demersum (Rigid hornwort)).